Reading from the N-terminus, the 464-residue chain is Soluble pyridine nucleotide transhydrogenase (464 aa).

Residue 35–44 (DSRRQVGGNC) coordinates FAD.

Belongs to the class-I pyridine nucleotide-disulfide oxidoreductase family. It depends on FAD as a cofactor.

It is found in the cytoplasm. The enzyme catalyses NAD(+) + NADPH = NADH + NADP(+). In terms of biological role, conversion of NADPH, generated by peripheral catabolic pathways, to NADH, which can enter the respiratory chain for energy generation. The protein is Soluble pyridine nucleotide transhydrogenase of Pseudomonas fluorescens (strain Pf0-1).